The following is a 430-amino-acid chain: Phosphomethylpyrimidine synthase (430 aa).

Residues Asn-67, Met-96, Tyr-125, His-161, 183 to 185, 224 to 227, and Glu-263 contribute to the substrate site; these read SRG and DALR. His-267 contributes to the Zn(2+) binding site. Tyr-290 is a binding site for substrate. Position 331 (His-331) interacts with Zn(2+). Residues Cys-406, Cys-409, and Cys-413 each contribute to the [4Fe-4S] cluster site.

The protein belongs to the ThiC family. In terms of assembly, homodimer. It depends on [4Fe-4S] cluster as a cofactor.

The enzyme catalyses 5-amino-1-(5-phospho-beta-D-ribosyl)imidazole + S-adenosyl-L-methionine = 4-amino-2-methyl-5-(phosphooxymethyl)pyrimidine + CO + 5'-deoxyadenosine + formate + L-methionine + 3 H(+). The protein operates within cofactor biosynthesis; thiamine diphosphate biosynthesis. Its function is as follows. Catalyzes the synthesis of the hydroxymethylpyrimidine phosphate (HMP-P) moiety of thiamine from aminoimidazole ribotide (AIR) in a radical S-adenosyl-L-methionine (SAM)-dependent reaction. This chain is Phosphomethylpyrimidine synthase, found in Campylobacter jejuni subsp. jejuni serotype O:6 (strain 81116 / NCTC 11828).